Here is a 172-residue protein sequence, read N- to C-terminus: uncharacterized protein (172 aa).

This is an uncharacterized protein from Saccharomyces cerevisiae (strain ATCC 204508 / S288c) (Baker's yeast).